The following is a 1358-amino-acid chain: DNA-directed RNA polymerase subunit beta (1358 aa).

Residues 1033-1051 (QGLEDRKKEHEARFDDKKG) show a composition bias toward basic and acidic residues. Positions 1033-1053 (QGLEDRKKEHEARFDDKKGKL) are disordered.

This sequence belongs to the RNA polymerase beta chain family. The RNAP catalytic core consists of 2 alpha, 1 beta, 1 beta' and 1 omega subunit. When a sigma factor is associated with the core the holoenzyme is formed, which can initiate transcription.

It catalyses the reaction RNA(n) + a ribonucleoside 5'-triphosphate = RNA(n+1) + diphosphate. Its function is as follows. DNA-dependent RNA polymerase catalyzes the transcription of DNA into RNA using the four ribonucleoside triphosphates as substrates. This chain is DNA-directed RNA polymerase subunit beta, found in Marinobacter nauticus (strain ATCC 700491 / DSM 11845 / VT8) (Marinobacter aquaeolei).